A 216-amino-acid chain; its full sequence is Glycerol-3-phosphate acyltransferase (216 aa).

A run of 5 helical transmembrane segments spans residues 4 to 24 (IALG…AILV), 56 to 76 (VAVL…AYLL), 80 to 100 (PLYL…PVFF), 112 to 132 (FGAI…TWLL), and 138 to 158 (GYSS…VWWF).

It belongs to the PlsY family. In terms of assembly, probably interacts with PlsX.

Its subcellular location is the cell inner membrane. It carries out the reaction an acyl phosphate + sn-glycerol 3-phosphate = a 1-acyl-sn-glycero-3-phosphate + phosphate. Its pathway is lipid metabolism; phospholipid metabolism. Functionally, catalyzes the transfer of an acyl group from acyl-phosphate (acyl-PO(4)) to glycerol-3-phosphate (G3P) to form lysophosphatidic acid (LPA). This enzyme utilizes acyl-phosphate as fatty acyl donor, but not acyl-CoA or acyl-ACP. This chain is Glycerol-3-phosphate acyltransferase, found in Yersinia pseudotuberculosis serotype O:1b (strain IP 31758).